A 557-amino-acid chain; its full sequence is DNA ligase (557 aa).

Glu251 is an ATP binding site. The active-site N6-AMP-lysine intermediate is the Lys253. ATP contacts are provided by Arg258, Arg273, Glu303, Phe342, Arg418, and Lys424.

Belongs to the ATP-dependent DNA ligase family. Mg(2+) is required as a cofactor.

It carries out the reaction ATP + (deoxyribonucleotide)n-3'-hydroxyl + 5'-phospho-(deoxyribonucleotide)m = (deoxyribonucleotide)n+m + AMP + diphosphate.. Its function is as follows. DNA ligase that seals nicks in double-stranded DNA during DNA replication, DNA recombination and DNA repair. The polypeptide is DNA ligase (Methanosphaera stadtmanae (strain ATCC 43021 / DSM 3091 / JCM 11832 / MCB-3)).